The chain runs to 52 residues: Lantibiotic epidermin (52 aa).

A propeptide spanning residues 1–30 is cleaved from the precursor; that stretch reads MEAVKEKNDLFNLDVKVNAKESNDSGAEPR. Positions 33–37 form a cross-link, lanthionine (Ser-Cys); sequence SKFIC. Positions 38–41 form a cross-link, beta-methyllanthionine (Thr-Cys); the sequence is TPGC. A (Z)-2,3-didehydrobutyrine modification is found at T44. The lanthionine (Ser-Cys) cross-link spans 46 to 51; sequence SFNSYC. A cross-link (S-(2-aminovinyl)-D-cysteine (Ser-Cys)) is located at residues 49–52; the sequence is SYCC.

It belongs to the type A lantibiotic family. Post-translationally, maturation of lantibiotics involves the enzymatic conversion of Thr, and Ser into dehydrated AA and the formation of thioether bonds with cysteine. The C-terminal lanthionine undergoes decarboxylation. This is followed by membrane translocation and cleavage of the modified precursor. In terms of processing, the 2,3-didehydrobutyrine is determined to be the Z-isomer.

Its function is as follows. Lanthionine-containing peptide antibiotic (lantibiotic) active on Gram-positive bacteria. The bactericidal activity of lantibiotics is based on depolarization of energized bacterial cytoplasmic membranes, initiated by the formation of aqueous transmembrane pores. The polypeptide is Lantibiotic epidermin (epiA) (Staphylococcus epidermidis).